A 338-amino-acid chain; its full sequence is tRNA N6-adenosine threonylcarbamoyltransferase (338 aa).

Positions 109 and 113 each coordinate Fe cation. Substrate-binding positions include 132-136 (AISGA), D165, G178, and N277. A Fe cation-binding site is contributed by D302.

The protein belongs to the KAE1 / TsaD family. Fe(2+) is required as a cofactor.

The protein localises to the cytoplasm. It catalyses the reaction L-threonylcarbamoyladenylate + adenosine(37) in tRNA = N(6)-L-threonylcarbamoyladenosine(37) in tRNA + AMP + H(+). Required for the formation of a threonylcarbamoyl group on adenosine at position 37 (t(6)A37) in tRNAs that read codons beginning with adenine. Is involved in the transfer of the threonylcarbamoyl moiety of threonylcarbamoyl-AMP (TC-AMP) to the N6 group of A37, together with TsaE and TsaB. TsaD likely plays a direct catalytic role in this reaction. This is tRNA N6-adenosine threonylcarbamoyltransferase from Chlamydia trachomatis serovar L2b (strain UCH-1/proctitis).